The primary structure comprises 1457 residues: Ras guanine nucleotide exchange factor C (1457 aa).

One copy of the RCC1 1 repeat lies at 1–55; the sequence is MSVFTFGHGSNGALGLGKITDDTCPTPQKVNYFTEIDKRVKKVACGSYHTVFVTD. Disordered stretches follow at residues 75–196, 209–264, 282–313, and 376–404; these read FYTS…PLLN, HYES…RINK, EQQQ…DEDP, and QQQL…SLQT. 2 stretches are compositionally biased toward low complexity: residues 83-121 and 134-158; these read TTTT…KIVN and SNTT…LPPT. Composition is skewed to basic and acidic residues over residues 171–188 and 209–224; these read IKLD…ELIQ and HYES…KDNE. The span at 225–237 shows a compositional bias: acidic residues; that stretch reads NENEEDEDDDDDD. A compositionally biased stretch (basic and acidic residues) spans 238–249; the sequence is STIRQNEDKESS. Low complexity-rich tracts occupy residues 283-292 and 376-403; these read QQQQPQQPQQ and QQQL…SSLQ. 4 RCC1 repeats span residues 351 to 401, 432 to 483, 485 to 549, and 590 to 647; these read GGNV…SSSS, WGEL…CYTE, GKMY…VLTQ, and SGEV…ALVE. The DH domain maps to 650–971; it reads PKTKLALQLV…QVLLERMNQN (322 aa). The segment covering 703–715 has biased composition (low complexity); the sequence is LPPSLKGLSGGLP. The segment at 703–762 is disordered; the sequence is LPPSLKGLSGGLPDNANNTIKNGKDKDNHHNGDSNGHHSNGHYHGNGNNGNNSITTSNSI. Basic and acidic residues predominate over residues 724 to 738; it reads NGKDKDNHHNGDSNG. A compositionally biased stretch (low complexity) spans 739 to 762; the sequence is HHSNGHYHGNGNNGNNSITTSNSI. Positions 989-1109 constitute an N-terminal Ras-GEF domain; sequence GNPQIMGGSL…SVSQIKLQYF (121 aa). The interval 1127–1210 is disordered; sequence LTQNEITTPP…NNNNNNNNLT (84 aa). Residues 1138–1211 are a coiled coil; the sequence is LQIQNNNQNN…NNNNNNNLTN (74 aa). Residues 1142–1210 show a composition bias toward low complexity; the sequence is NNNQNNNLEN…NNNNNNNNLT (69 aa). The Ras-GEF domain maps to 1232 to 1454; it reads QPIEVAQTLT…DDKQAQKISS (223 aa).

Functionally, promotes the exchange of Ras-bound GDP by GTP. The polypeptide is Ras guanine nucleotide exchange factor C (gefC) (Dictyostelium discoideum (Social amoeba)).